Here is a 126-residue protein sequence, read N- to C-terminus: Flagellar assembly factor FliW (126 aa).

Belongs to the FliW family. In terms of assembly, interacts with translational regulator CsrA and flagellin(s).

It is found in the cytoplasm. Its function is as follows. Acts as an anti-CsrA protein, binds CsrA and prevents it from repressing translation of its target genes, one of which is flagellin. Binds to flagellin and participates in the assembly of the flagellum. The protein is Flagellar assembly factor FliW of Sulfurimonas denitrificans (strain ATCC 33889 / DSM 1251) (Thiomicrospira denitrificans (strain ATCC 33889 / DSM 1251)).